The primary structure comprises 437 residues: UDP-N-acetylmuramoylalanine--D-glutamate ligase (437 aa).

ATP is bound at residue Gly-115–Thr-121.

This sequence belongs to the MurCDEF family.

Its subcellular location is the cytoplasm. It catalyses the reaction UDP-N-acetyl-alpha-D-muramoyl-L-alanine + D-glutamate + ATP = UDP-N-acetyl-alpha-D-muramoyl-L-alanyl-D-glutamate + ADP + phosphate + H(+). It participates in cell wall biogenesis; peptidoglycan biosynthesis. In terms of biological role, cell wall formation. Catalyzes the addition of glutamate to the nucleotide precursor UDP-N-acetylmuramoyl-L-alanine (UMA). The protein is UDP-N-acetylmuramoylalanine--D-glutamate ligase of Vibrio parahaemolyticus serotype O3:K6 (strain RIMD 2210633).